We begin with the raw amino-acid sequence, 288 residues long: 4-diphosphocytidyl-2-C-methyl-D-erythritol kinase (288 aa).

Lys8 is a catalytic residue. ATP is bound at residue Pro92–Thr102. Residue Asp134 is part of the active site.

This sequence belongs to the GHMP kinase family. IspE subfamily.

It carries out the reaction 4-CDP-2-C-methyl-D-erythritol + ATP = 4-CDP-2-C-methyl-D-erythritol 2-phosphate + ADP + H(+). Its pathway is isoprenoid biosynthesis; isopentenyl diphosphate biosynthesis via DXP pathway; isopentenyl diphosphate from 1-deoxy-D-xylulose 5-phosphate: step 3/6. Catalyzes the phosphorylation of the position 2 hydroxy group of 4-diphosphocytidyl-2C-methyl-D-erythritol. In Clostridium perfringens (strain ATCC 13124 / DSM 756 / JCM 1290 / NCIMB 6125 / NCTC 8237 / Type A), this protein is 4-diphosphocytidyl-2-C-methyl-D-erythritol kinase.